We begin with the raw amino-acid sequence, 509 residues long: Inositol-3-phosphate synthase 1 (509 aa).

It belongs to the myo-inositol 1-phosphate synthase family. The cofactor is NAD(+). In terms of tissue distribution, highly expressed in anthers, but transcripts are undetectable in roots, leaves, flowers and embryos.

It localises to the cytoplasm. The catalysed reaction is D-glucose 6-phosphate = 1D-myo-inositol 3-phosphate. It functions in the pathway polyol metabolism; myo-inositol biosynthesis; myo-inositol from D-glucose 6-phosphate: step 1/2. In terms of biological role, key enzyme in myo-inositol biosynthesis pathway that catalyzes the conversion of glucose 6-phosphate to 1-myo-inositol 1-phosphate in a NAD-dependent manner. Is a key enzyme in the phytic acid biosynthesis pathway in seeds. In Oryza sativa subsp. japonica (Rice), this protein is Inositol-3-phosphate synthase 1.